The sequence spans 350 residues: Autophagy-related protein 3 (350 aa).

The interval 85-166 (NFAGDAGLEE…EEDDEAIIRD (82 aa)) is flexible region. The tract at residues 97–171 (VDDGDEFKGS…AIIRDTDASG (75 aa)) is disordered. The segment covering 102–113 (EFKGSKGDDDGW) has biased composition (basic and acidic residues). A compositionally biased stretch (acidic residues) spans 146 to 161 (DDDDDIPDMEDEEDDE). Residue cysteine 244 is the Glycyl thioester intermediate of the active site. Positions 248–326 (PVMKTLLDRA…DQEVAIRVDQ (79 aa)) are handle region. Lysine 262 and lysine 267 each carry N6-acetyllysine.

It belongs to the ATG3 family. Monomer. Interacts with ATG8 through an intermediate thioester bond through the C-terminal Gly of ATG8. Also interacts with the 40 amino acid C-terminal region of the E1-like ATG7 enzyme. Also interacts with the ATG12-ATG5 conjugate. Interacts with HAT1. Post-translationally, acetylated by HAT1 at Lys-262 and Lys-267, which affects the interaction with ATG8 and prevents autophagy during both appressorium development and nutrient starvation.

Its subcellular location is the preautophagosomal structure. The protein resides in the cytoplasm. Its function is as follows. E2 conjugating enzyme required for the cytoplasm to vacuole transport (Cvt) and autophagy. Required for selective autophagic degradation of the nucleus (nucleophagy) as well as for mitophagy which contributes to regulate mitochondrial quantity and quality by eliminating the mitochondria to a basal level to fulfill cellular energy requirements and preventing excess ROS production. Responsible for the E2-like covalent binding of phosphatidylethanolamine to the C-terminal Gly of ATG8. The ATG12-ATG5 conjugate plays a role of an E3 and promotes the transfer of ATG8 from ATG3 to phosphatidylethanolamine (PE). This step is required for the membrane association of ATG8. The formation of the ATG8-phosphatidylethanolamine conjugate is essential for autophagy and for the cytoplasm to vacuole transport (Cvt). The ATG8-PE conjugate mediates tethering between adjacent membranes and stimulates membrane hemifusion, leading to expansion of the autophagosomal membrane during autophagy. Plays a role in appressorium formation and pathogenicity. The sequence is that of Autophagy-related protein 3 from Pyricularia oryzae (strain 70-15 / ATCC MYA-4617 / FGSC 8958) (Rice blast fungus).